Reading from the N-terminus, the 734-residue chain is Photosystem I P700 chlorophyll a apoprotein A2 (734 aa).

The next 8 helical transmembrane spans lie at 46 to 69, 135 to 158, 175 to 199, 273 to 291, 330 to 353, 369 to 395, 417 to 439, and 517 to 535; these read IFSS…FHVA, LYNG…LHLQ, LNHH…HVAI, MAHH…GHMY, LHMQ…QHMY, AALY…IFFI, AIIS…LYIH, and FLVH…LILV. Residues C559 and C568 each contribute to the [4Fe-4S] cluster site. 2 helical membrane-spanning segments follow: residues 575–596 and 643–665; these read AFYL…YWHW and LSVW…MFLI. Residues H654, M662, and Y670 each contribute to the chlorophyll a site. Phylloquinone is bound at residue W671. The helical transmembrane segment at 707–727 threads the bilayer; it reads LVGLVHFSVGYILTYAAFVIA.

This sequence belongs to the PsaA/PsaB family. As to quaternary structure, the PsaA/B heterodimer binds the P700 chlorophyll special pair and subsequent electron acceptors. PSI consists of a core antenna complex that captures photons, and an electron transfer chain that converts photonic excitation into a charge separation. The eukaryotic PSI reaction center is composed of at least 11 subunits. P700 is a chlorophyll a/chlorophyll a' dimer, A0 is one or more chlorophyll a, A1 is one or both phylloquinones and FX is a shared 4Fe-4S iron-sulfur center. is required as a cofactor.

It is found in the plastid. Its subcellular location is the chloroplast thylakoid membrane. It catalyses the reaction reduced [plastocyanin] + hnu + oxidized [2Fe-2S]-[ferredoxin] = oxidized [plastocyanin] + reduced [2Fe-2S]-[ferredoxin]. In terms of biological role, psaA and PsaB bind P700, the primary electron donor of photosystem I (PSI), as well as the electron acceptors A0, A1 and FX. PSI is a plastocyanin/cytochrome c6-ferredoxin oxidoreductase, converting photonic excitation into a charge separation, which transfers an electron from the donor P700 chlorophyll pair to the spectroscopically characterized acceptors A0, A1, FX, FA and FB in turn. Oxidized P700 is reduced on the lumenal side of the thylakoid membrane by plastocyanin or cytochrome c6. The protein is Photosystem I P700 chlorophyll a apoprotein A2 of Gracilaria tenuistipitata var. liui (Red alga).